The sequence spans 423 residues: Phytoene synthase, chloroplastic (423 aa).

Residues 1-136 (MVVAILRVVS…DAYDRCGEVC (136 aa)) constitute a chloroplast transit peptide.

The protein belongs to the phytoene/squalene synthase family. As to quaternary structure, monomer.

It is found in the plastid. The protein localises to the chloroplast. The enzyme catalyses 2 (2E,6E,10E)-geranylgeranyl diphosphate = 15-cis-phytoene + 2 diphosphate. Its pathway is carotenoid biosynthesis; phytoene biosynthesis; all-trans-phytoene from geranylgeranyl diphosphate: step 1/1. Its function is as follows. Catalyzes the reaction from prephytoene diphosphate to phytoene. The protein is Phytoene synthase, chloroplastic (PSY) of Narcissus pseudonarcissus (Daffodil).